We begin with the raw amino-acid sequence, 286 residues long: Diaminopimelate epimerase (286 aa).

N22, Q56, and N76 together coordinate substrate. The active-site Proton donor is the C85. Substrate-binding positions include 86 to 87 (GN), N169, N202, and 220 to 221 (ER). C229 acts as the Proton acceptor in catalysis. Substrate is bound at residue 230-231 (GS).

Belongs to the diaminopimelate epimerase family. In terms of assembly, homodimer.

The protein localises to the cytoplasm. It catalyses the reaction (2S,6S)-2,6-diaminopimelate = meso-2,6-diaminopimelate. Its pathway is amino-acid biosynthesis; L-lysine biosynthesis via DAP pathway; DL-2,6-diaminopimelate from LL-2,6-diaminopimelate: step 1/1. Its function is as follows. Catalyzes the stereoinversion of LL-2,6-diaminopimelate (L,L-DAP) to meso-diaminopimelate (meso-DAP), a precursor of L-lysine and an essential component of the bacterial peptidoglycan. This Buchnera aphidicola subsp. Baizongia pistaciae (strain Bp) protein is Diaminopimelate epimerase.